Here is a 4377-residue protein sequence, read N- to C-terminus: Ankyrin-3 (4377 aa).

Residues 1-44 (MAHAASQLKKNRDLEINAEEEPEKKRKHRKRSRDRKKKSDANAS) are disordered. Residues 25 to 38 (KRKHRKRSRDRKKK) show a composition bias toward basic residues. S39 carries the post-translational modification Phosphoserine. 23 ANK repeats span residues 73–102 (NGLN…NVDA), 106–135 (KGNT…NVNA), 139–168 (NGFT…SQSL), 172–201 (DGFT…KGKV), 203–230 (LPAL…NADV), 234–263 (SGFT…AVDF), 267–296 (NDIT…KIDA), 300–329 (DGLT…PILS), 333–362 (NGLS…PVDD), 366–395 (DYLT…NPNA), 399–428 (NGFT…SIQA), 432–461 (SGLT…SPNT), 465–494 (RGET…QVEA), 498–527 (DDQT…SPNA), 531–560 (SGYT…SLSI), 564–593 (KGFT…SPDA), 597–626 (SGLT…SPHA), 630–659 (NGYT…DANA), 663–692 (QGIA…NVNL), 696–725 (SGLT…HVDA), 729–758 (MGYT…KVNA), 762–791 (NGYT…SPNE), and 795–825 (NGNT…TMTT). Position 468 is a phosphoserine (T468). S623 is subject to Phosphoserine. 2 positions are modified to phosphoserine: T765 and E791. Phosphoserine is present on residues S847, S861, S867, S913, S916, S922, S957, S959, and S1113. 2 consecutive ZU5 domains span residues 984-1139 (FLVS…VVSR) and 1141-1288 (KQES…LADC). The UPA domain stretch occupies residues 1273-1407 (VSFTTNVSAR…SIKIRDTSQE (135 aa)). S1445, S1459, and S1470 each carry phosphoserine. Residues 1519–1539 (SGFTSLSSSSSNTPSASPLKS) are compositionally biased toward low complexity. Residues 1519–1540 (SGFTSLSSSSSNTPSASPLKSI) are disordered. 9 positions are modified to phosphoserine: S1622, S1625, S1632, I1651, L1658, S1984, S2111, S2123, and S2126. 15 disordered regions span residues 1968-1987 (VDNK…SPED), 2107-2159 (TILE…VPIP), 2176-2245 (YDPS…EETH), 2299-2322 (AVSP…DNQM), 2383-2433 (FPCS…ISDD), 2474-2508 (DVSH…KIAT), 2588-2751 (LTEV…VKKI), 2795-2824 (QSNE…MPDS), 3036-3067 (PPLE…DVFD), 3131-3272 (TFYT…KKHH), 3298-3516 (PVIR…SVFP), 3538-3607 (KGLD…HEGK), 3635-3718 (GEHT…DPKL), 3868-3897 (KATS…QSEK), and 4019-4090 (KKMQ…CERT). Residues 1977-1986 (PKSDKGHSPE) are compositionally biased toward basic and acidic residues. A compositionally biased stretch (basic and acidic residues) spans 2115 to 2136 (FSQHDQDKSPLSDSGFETRSEK). Residues 2137-2146 (TPSAPQSAES) are compositionally biased toward polar residues. The segment covering 2299 to 2308 (AVSPDVHKSA) has biased composition (basic and acidic residues). Positions 2390-2399 (GQQEEEELTA) are enriched in acidic residues. Over residues 2407-2417 (LESSRVNTPVS) the composition is skewed to polar residues. 2 stretches are compositionally biased toward basic and acidic residues: residues 2497–2508 (GSDKRSREKIAT) and 2588–2612 (LTEV…PEKK). A compositionally biased stretch (low complexity) spans 2622 to 2631 (SSQSPTSSSP). The segment covering 2706–2716 (SGFQLKQSKLS) has biased composition (polar residues). A compositionally biased stretch (basic and acidic residues) spans 2720–2742 (LKFEQGTHAKSKDMSQEDRKSDG). The span at 2796 to 2807 (SNEIVVNDSGSD) shows a compositional bias: polar residues. 2 stretches are compositionally biased toward polar residues: residues 3154-3186 (EQVS…SKTP) and 3214-3224 (KSTSLKQTTVE). Basic and acidic residues-rich tracts occupy residues 3227 to 3242 (AVER…DSNQ) and 3335 to 3361 (KLKE…KELE). Polar residues predominate over residues 3377–3402 (SPQNEIAQNGNNDQSITECSIATTAE). Over residues 3409–3428 (ATEIDSLDGYDLQDEDDGLT) the composition is skewed to acidic residues. 2 stretches are compositionally biased toward basic and acidic residues: residues 3465 to 3481 (EVIE…DKPP) and 3549 to 3575 (RGDD…EDRS). A compositionally biased stretch (low complexity) spans 3576-3598 (PATTPDTTPARTPTDESTPTSEP). The segment covering 3637–3651 (HTSEGKSGDQGEGDK) has biased composition (basic and acidic residues). Polar residues-rich tracts occupy residues 3654-3669 (VTAT…TVET), 3676-3713 (ETPT…NTSK), 3880-3897 (HMSN…QSEK), and 4033-4052 (SRNT…VTTK). A compositionally biased stretch (basic and acidic residues) spans 4053–4076 (SARDKKTEAAPLKSKSEKAGSEKR). Positions 4090–4174 (TDIRMAIVAD…DIVTLLEGPI (85 aa)) constitute a Death domain. Residues S4211 and S4229 each carry the phosphoserine modification. 2 disordered regions span residues 4251–4298 (NGSH…EPAS) and 4323–4377 (PVSM…KSHS). Polar residues predominate over residues 4268-4277 (PESQNDVGKQ). S4290 and S4298 each carry phosphoserine. Over residues 4337–4347 (GKPRLSLHEEE) the composition is skewed to basic and acidic residues. At S4350 the chain carries Phosphoserine. A compositionally biased stretch (basic residues) spans 4362–4377 (VKTKKEIRHVEKKSHS).

In terms of assembly, directly interacts with DMD and betaDAG1. This interaction does not interfere with binding between DMD and betaDAG1. It is also required for DMD and betaDAG1 retention at costameres. Interacts (via N-terminal ANK repeats) with SCHIP1 isoform 5 (via C-terminus); this interaction is required for the localization at axon initial segments (AISs) and nodes of Ranvier (NRs). May be a constituent of a NFASC/NRCAM/ankyrin G complex. Interacts with RHBG. Interacts with PLEC and FLNC. Interacts with KCNA1; this inhibits channel activity. Interacts (via ANK repeats) with IQCJ-SCHIP1; required for IQCJ-SCHIP1 localization at axon initial segments (AIS) and nodes of Ranvier. Interacts with SCHIP1. Interacts with SCN5A. Interacts with PKP2 and GJA1/CX43. In terms of tissue distribution, expressed in brain, neurons, muscles and other tissues.

The protein localises to the cytoplasm. The protein resides in the cytoskeleton. It localises to the cell projection. It is found in the axon. Its subcellular location is the cell membrane. The protein localises to the sarcolemma. The protein resides in the postsynaptic cell membrane. It localises to the lysosome. It is found in the T-tubule. Its subcellular location is the golgi apparatus. In terms of biological role, membrane-cytoskeleton linker. May participate in the maintenance/targeting of ion channels and cell adhesion molecules at the nodes of Ranvier and axonal initial segments. In skeletal muscle, required for costamere localization of DMD and betaDAG1. Regulates KCNA1 channel activity in function of dietary Mg(2+) levels, and thereby contributes to the regulation of renal Mg(2+) reabsorption. Required for intracellular adhesion and junctional conductance in myocytes, potentially via stabilization of GJA1/CX43 protein abundance and promotion of PKP2, GJA1/CX43, and SCN5A/Nav1.5 localization to cell-cell junctions. Its function is as follows. May be part of a Golgi-specific membrane cytoskeleton in association with beta-spectrin. The polypeptide is Ankyrin-3 (Homo sapiens (Human)).